The following is a 163-amino-acid chain: Cyanate hydratase (163 aa).

Residues R103, E106, and S129 contribute to the active site.

The protein belongs to the cyanase family.

The enzyme catalyses cyanate + hydrogencarbonate + 3 H(+) = NH4(+) + 2 CO2. Its function is as follows. Catalyzes the reaction of cyanate with bicarbonate to produce ammonia and carbon dioxide. The sequence is that of Cyanate hydratase from Ajellomyces dermatitidis (strain ER-3 / ATCC MYA-2586) (Blastomyces dermatitidis).